A 176-amino-acid chain; its full sequence is Lipoprotein signal peptidase (176 aa).

A run of 3 helical transmembrane segments spans residues 12–32 (WYWMVVLVFIADQLSKQWVLA), 67–87 (WQRWFFTFVAVGFSTLLTIWL), and 94–116 (MWRLNLAYTLVIGGALGNLIDRL). Catalysis depends on residues Asp-123 and Asp-141. The chain crosses the membrane as a helical span at residues 137-157 (FNIADSAICVGAALIIIDSII).

This sequence belongs to the peptidase A8 family.

It localises to the cell inner membrane. The enzyme catalyses Release of signal peptides from bacterial membrane prolipoproteins. Hydrolyzes -Xaa-Yaa-Zaa-|-(S,diacylglyceryl)Cys-, in which Xaa is hydrophobic (preferably Leu), and Yaa (Ala or Ser) and Zaa (Gly or Ala) have small, neutral side chains.. It participates in protein modification; lipoprotein biosynthesis (signal peptide cleavage). In terms of biological role, this protein specifically catalyzes the removal of signal peptides from prolipoproteins. This is Lipoprotein signal peptidase from Shewanella woodyi (strain ATCC 51908 / MS32).